Consider the following 306-residue polypeptide: Tyrosine recombinase XerC (306 aa).

The Core-binding (CB) domain maps to 10-94; that stretch reads ARCHSYLQQF…AVKQWGEFLL (85 aa). The region spanning 115 to 294 is the Tyr recombinase domain; it reads PLPKNIDVDS…DFQHLAKVYD (180 aa). Residues Arg-154, Lys-178, His-246, Arg-249, and His-272 contribute to the active site. Tyr-281 functions as the O-(3'-phospho-DNA)-tyrosine intermediate in the catalytic mechanism.

The protein belongs to the 'phage' integrase family. XerC subfamily. In terms of assembly, forms a cyclic heterotetrameric complex composed of two molecules of XerC and two molecules of XerD.

Its subcellular location is the cytoplasm. Its function is as follows. Site-specific tyrosine recombinase, which acts by catalyzing the cutting and rejoining of the recombining DNA molecules. The XerC-XerD complex is essential to convert dimers of the bacterial chromosome into monomers to permit their segregation at cell division. It also contributes to the segregational stability of plasmids. The polypeptide is Tyrosine recombinase XerC (Shewanella oneidensis (strain ATCC 700550 / JCM 31522 / CIP 106686 / LMG 19005 / NCIMB 14063 / MR-1)).